Reading from the N-terminus, the 202-residue chain is Translation initiation factor IF-3 (202 aa).

Residues 172–202 (KTRASARHPEVPGAGSVQDIDATGDTDGSPH) form a disordered region.

The protein belongs to the IF-3 family. In terms of assembly, monomer.

The protein localises to the cytoplasm. In terms of biological role, IF-3 binds to the 30S ribosomal subunit and shifts the equilibrium between 70S ribosomes and their 50S and 30S subunits in favor of the free subunits, thus enhancing the availability of 30S subunits on which protein synthesis initiation begins. This Mycobacterium leprae (strain TN) protein is Translation initiation factor IF-3.